The sequence spans 357 residues: NAD-dependent protein deacetylase HST2 (357 aa).

S2 bears the N-acetylserine mark. The Deacetylase sirtuin-type domain occupies 5–284 (TASTEMSVRK…EQLVEELGWQ (280 aa)). Residues 32-52 (GAGISTSCGIPDFRSPGTGLY) and 115-118 (QNID) contribute to the NAD(+) site. H135 (proton acceptor) is an active-site residue. The Zn(2+) site is built by C143, C146, C170, and C173. NAD(+) is bound by residues 223–225 (GTS), 248–250 (NLE), and S270. Residues 317-329 (LDQSEHESADKKD) show a composition bias toward basic and acidic residues. Residues 317 to 357 (LDQSEHESADKKDKKLQRLNGHDSDEDGASNSSSSQKAAKE) are disordered. Residue S340 is modified to Phosphoserine.

It belongs to the sirtuin family. Class I subfamily. In terms of assembly, homotrimer. Monomer. Homotrimeric in its unliganded state. Undergoes a trimer-monomer transition upon acetyl-lysine substrate binding. It depends on Zn(2+) as a cofactor.

The protein localises to the cytoplasm. The protein resides in the nucleus. It carries out the reaction N(6)-acetyl-L-lysyl-[protein] + NAD(+) + H2O = 2''-O-acetyl-ADP-D-ribose + nicotinamide + L-lysyl-[protein]. Inhibited by ADP-ribose and nicotinamide. In terms of biological role, NAD-dependent histone deacetylase that is involved in nuclear silencing events. Derepresses subtelomeric silencing and increases repression in nucleolar (rDNA) silencing. Its function is negatively regulated by active nuclear export. The polypeptide is NAD-dependent protein deacetylase HST2 (HST2) (Saccharomyces cerevisiae (strain ATCC 204508 / S288c) (Baker's yeast)).